The chain runs to 194 residues: Probable nicotinate-nucleotide adenylyltransferase (194 aa).

Belongs to the NadD family.

It carries out the reaction nicotinate beta-D-ribonucleotide + ATP + H(+) = deamido-NAD(+) + diphosphate. It functions in the pathway cofactor biosynthesis; NAD(+) biosynthesis; deamido-NAD(+) from nicotinate D-ribonucleotide: step 1/1. In terms of biological role, catalyzes the reversible adenylation of nicotinate mononucleotide (NaMN) to nicotinic acid adenine dinucleotide (NaAD). The chain is Probable nicotinate-nucleotide adenylyltransferase from Brucella suis biovar 1 (strain 1330).